A 565-amino-acid chain; its full sequence is DNA-dependent metalloprotease SPRTN (565 aa).

Residues 23–130 (RALFLEFNDT…RTGANISVYH (108 aa)) form the SprT-like domain. H88 serves as a coordination point for Zn(2+). E89 is an active-site residue. Residues H92 and H107 each contribute to the Zn(2+) site. The interval 191–219 (EPENYPQKRKRKNDPTISEVNSSSHVKGK) is disordered. The segment covering 205 to 215 (PTISEVNSSSH) has biased composition (polar residues). Positions 231–239 (FSGTGYKLF) match the SHP-box motif. A PIP-box motif is present at residues 288–295 (STPAQSIL). The disordered stretch occupies residues 349–389 (TLPSPSIQSTSQKPQKDISFGFTLPSQSFPSTSPGSNSENK). 2 stretches are compositionally biased toward polar residues: residues 351–361 (PSPSIQSTSQK) and 372–386 (LPSQ…GSNS). A UBZ4-type 1 zinc finger spans residues 436 to 463 (KVSCPVCGTEVLECKINDHLDTCTSSGP). C439, C442, H454, and C458 together coordinate Zn(2+). Positions 476–499 (QSFPSTSQGSNSAIKEPLYKKLQI) match the Nuclear localization signal motif. The UBZ4-type 2 zinc finger occupies 537–564 (KVCCPVCGTDVLQDKINDHLDTCLQNCN). Residues C540, C543, H555, and C559 each coordinate Zn(2+).

Belongs to the Spartan family. Homodimer. It depends on Zn(2+) as a cofactor. Post-translationally, autocatalytically cleaved in response to double-stranded DNA-binding: autocatalytic cleavage takes place in trans and leads to inactivation.

It is found in the nucleus. Its subcellular location is the chromosome. Its activity is regulated as follows. DNA-binding activates the protease activity: single-stranded DNA-binding specifically activates ability to cleave covalent DNA-protein cross-links (DPCs). In contrast, double-stranded DNA-binding specifically activates autocatalytic cleavage, and subsequent inactivation. Functionally, DNA-dependent metalloendopeptidase that mediates the proteolytic cleavage of covalent DNA-protein cross-links (DPCs) during DNA synthesis, thereby playing a key role in maintaining genomic integrity. DPCs are highly toxic DNA lesions that interfere with essential chromatin transactions, such as replication and transcription, and which are induced by reactive agents, such as UV light or formaldehyde. Associates with the DNA replication machinery and specifically removes DPCs during DNA synthesis. Catalyzes proteolytic cleavage of the hmces DNA-protein cross-link following unfolding by the brip1/fancj helicase. Acts as a pleiotropic protease for DNA-binding proteins cross-linked with DNA, such as top1, top2a, histones H3 and H4. Mediates degradation of DPCs that are not ubiquitinated, while it is not able to degrade ubiquitinated DPCs. SPRTN activation requires polymerase collision with DPCs followed by helicase bypass of DPCs. May also act as a 'reader' of ubiquitinated pcna: facilitates chromatin association of rad18 and is required for efficient pcna monoubiquitination, promoting a feed-forward loop to enhance pcna ubiquitination and translesion DNA synthesis. Acts as a regulator of translesion DNA synthesis by recruiting vcp/p97 to sites of DNA damage. In Xenopus laevis (African clawed frog), this protein is DNA-dependent metalloprotease SPRTN.